A 282-amino-acid polypeptide reads, in one-letter code: Acyl-CoA-binding domain-containing protein 6 (282 aa).

Residues 1–12 (MASSFLPSGATT) are compositionally biased toward polar residues. The interval 1–34 (MASSFLPSGATTGDSGGELSSGDDSGDVESLQSP) is disordered. The span at 17–31 (GELSSGDDSGDVESL) shows a compositional bias: low complexity. S41 carries the phosphoserine modification. The ACB domain maps to 42-127 (LPELFEKAAE…VKKLDPSWNP (86 aa)). Residues 69–73 (YARYK) and K95 each bind an acyl-CoA. S106 carries the phosphoserine modification. Residue Y114 participates in an acyl-CoA binding. ANK repeat units follow at residues 191-220 (EGRT…DINC) and 224-253 (EGQT…DPTL).

Monomer.

The protein localises to the cytoplasm. Binds long-chain acyl-coenzyme A molecules with a strong preference for unsaturated C18:1-CoA, lower affinity for unsaturated C20:4-CoA, and very weak affinity for saturated C16:0-CoA. Does not bind fatty acids. This Bos taurus (Bovine) protein is Acyl-CoA-binding domain-containing protein 6 (ACBD6).